The primary structure comprises 265 residues: Non-seed lectin (265 aa).

A signal peptide (or 23) is located at residues 1–21; the sequence is MALYRTKELVSLVSIMFVLLA. 2 N-linked (GlcNAc...) asparagine glycosylation sites follow: Asn-59 and Asn-127.

The protein belongs to the leguminous lectin family. Monomer. As to expression, most highly expressed in the epidermal layer of developing shoot tips.

This chain is Non-seed lectin, found in Pisum sativum (Garden pea).